Here is a 329-residue protein sequence, read N- to C-terminus: Malate dehydrogenase (329 aa).

12–18 provides a ligand contact to NAD(+); it reads GAAGQIC. Substrate-binding residues include R95 and R101. Residues N108, Q115, and 132-134 contribute to the NAD(+) site; that span reads VGN. 2 residues coordinate substrate: N134 and R165. The Proton acceptor role is filled by H190.

Belongs to the LDH/MDH superfamily. MDH type 2 family. As to quaternary structure, homodimer.

It carries out the reaction (S)-malate + NAD(+) = oxaloacetate + NADH + H(+). Functionally, catalyzes the reversible oxidation of malate to oxaloacetate. The polypeptide is Malate dehydrogenase (Aquaspirillum arcticum).